The following is a 933-amino-acid chain: Protein translocase subunit SecA (933 aa).

ATP-binding positions include Gln87, 105-109 (GEGKT), and Asp515. Disordered regions lie at residues 567-588 (ESRR…PGSS), 840-861 (DVEA…RHAA), and 880-933 (AAAE…CGKL). Basic and acidic residues predominate over residues 845–856 (EEQRRQEAERMQ). The span at 880–897 (AAAEGDSAPTGGAQQQSA) shows a compositional bias: low complexity. A compositionally biased stretch (basic and acidic residues) spans 905–914 (VAREGPKVGR). Zn(2+) contacts are provided by Cys918, Cys920, Cys929, and Cys930. Positions 924–933 (KKYKHCCGKL) are enriched in basic residues.

The protein belongs to the SecA family. As to quaternary structure, monomer and homodimer. Part of the essential Sec protein translocation apparatus which comprises SecA, SecYEG and auxiliary proteins SecDF-YajC and YidC. It depends on Zn(2+) as a cofactor.

It localises to the cell inner membrane. The protein resides in the cytoplasm. The enzyme catalyses ATP + H2O + cellular proteinSide 1 = ADP + phosphate + cellular proteinSide 2.. Functionally, part of the Sec protein translocase complex. Interacts with the SecYEG preprotein conducting channel. Has a central role in coupling the hydrolysis of ATP to the transfer of proteins into and across the cell membrane, serving both as a receptor for the preprotein-SecB complex and as an ATP-driven molecular motor driving the stepwise translocation of polypeptide chains across the membrane. The polypeptide is Protein translocase subunit SecA (Halorhodospira halophila (strain DSM 244 / SL1) (Ectothiorhodospira halophila (strain DSM 244 / SL1))).